The primary structure comprises 438 residues: Myosin light chain kinase, smooth muscle (438 aa).

A Protein kinase domain is found at 1 to 241 (FRLVEKKTGK…CTQCLQHPWL (241 aa)). Position 15 (Lys-15) interacts with ATP. Tyr-97 carries the phosphotyrosine; by ABL1 modification. Asp-107 (proton acceptor) is an active-site residue. Tyr-157 is subject to Phosphotyrosine; by ABL1. Positions 233–296 (TQCLQHPWLX…SGLSGRKSST (64 aa)) are calmodulin-binding. Residues Ser-281, Ser-282, Ser-294, Ser-295, and Ser-298 each carry the phosphoserine modification. Positions 283 to 438 (MAMISGLSGR…GEGGEEEEEE (156 aa)) are telokin. A disordered region spans residues 289 to 309 (LSGRKSSTGSPTSPLNAEKLE). Over residues 292–303 (RKSSTGSPTSPL) the composition is skewed to polar residues. Thr-300 carries the post-translational modification Phosphothreonine. Ser-301 is subject to Phosphoserine. The 90-residue stretch at 331 to 420 (PYFSKTIRDL…GEATCTAELI (90 aa)) folds into the Ig-like C2-type domain. Cys-352 and Cys-404 are oxidised to a cystine.

The protein belongs to the protein kinase superfamily. CAMK Ser/Thr protein kinase family. As to quaternary structure, all isoforms including Telokin bind calmodulin. Interacts with SVIL. Interacts with CTTN; this interaction is reduced during thrombin-induced endothelial cell (EC) contraction but is promoted by the barrier-protective agonist sphingosine 1-phosphate (S1P) within lamellipodia. A complex made of ABL1, CTTN and MYLK regulates cortical actin-based cytoskeletal rearrangement critical to sphingosine 1-phosphate (S1P)-mediated endothelial cell (EC) barrier enhancement. Binds to NAA10/ARD1 and PTK2B/PYK2. It depends on Mg(2+) as a cofactor. Requires Ca(2+) as cofactor. The C-terminus is deglutamylated by AGTPBP1/CCP1, AGBL1/CCP4 and AGBL4/CCP6, leading to the formation of Myosin light chain kinase, smooth muscle, deglutamylated form. The consequences of C-terminal deglutamylation are unknown. In terms of processing, can probably be down-regulated by phosphorylation. Tyrosine phosphorylation by ABL1 increases kinase activity, reverses MLCK-mediated inhibition of Arp2/3-mediated actin polymerization, and enhances CTTN-binding. Phosphorylation by SRC promotes CTTN binding.

The protein resides in the cytoplasm. The protein localises to the cell projection. Its subcellular location is the lamellipodium. It localises to the cleavage furrow. It is found in the cytoskeleton. The protein resides in the stress fiber. The enzyme catalyses L-seryl-[myosin light chain] + ATP = O-phospho-L-seryl-[myosin light chain] + ADP + H(+). It catalyses the reaction L-threonyl-[myosin light chain] + ATP = O-phospho-L-threonyl-[myosin light chain] + ADP + H(+). Its function is as follows. Calcium/calmodulin-dependent myosin light chain kinase implicated in smooth muscle contraction via phosphorylation of myosin light chains (MLC). Also regulates actin-myosin interaction through a non-kinase activity. Phosphorylates PTK2B/PYK2 and myosin light-chains. Involved in the inflammatory response (e.g. apoptosis, vascular permeability, leukocyte diapedesis), cell motility and morphology, airway hyperreactivity and other activities relevant to asthma. Required for tonic airway smooth muscle contraction that is necessary for physiological and asthmatic airway resistance. Necessary for gastrointestinal motility. Implicated in the regulation of endothelial as well as vascular permeability, probably via the regulation of cytoskeletal rearrangements. In the nervous system it has been shown to control the growth initiation of astrocytic processes in culture and to participate in transmitter release at synapses formed between cultured sympathetic ganglion cells. Critical participant in signaling sequences that result in fibroblast apoptosis. Plays a role in the regulation of epithelial cell survival. Required for epithelial wound healing, especially during actomyosin ring contraction during purse-string wound closure. Mediates RhoA-dependent membrane blebbing. Triggers TRPC5 channel activity in a calcium-dependent signaling, by inducing its subcellular localization at the plasma membrane. Promotes cell migration (including tumor cells) and tumor metastasis. PTK2B/PYK2 activation by phosphorylation mediates ITGB2 activation and is thus essential to trigger neutrophil transmigration during acute lung injury (ALI). May regulate optic nerve head astrocyte migration. Probably involved in mitotic cytoskeletal regulation. Regulates tight junction probably by modulating ZO-1 exchange in the perijunctional actomyosin ring. Mediates burn-induced microvascular barrier injury; triggers endothelial contraction in the development of microvascular hyperpermeability by phosphorylating MLC. Essential for intestinal barrier dysfunction. Mediates Giardia spp.-mediated reduced epithelial barrier function during giardiasis intestinal infection via reorganization of cytoskeletal F-actin and tight junctional ZO-1. Necessary for hypotonicity-induced Ca(2+) entry and subsequent activation of volume-sensitive organic osmolyte/anion channels (VSOAC) in cervical cancer cells. This chain is Myosin light chain kinase, smooth muscle (MYLK), found in Ovis aries (Sheep).